Here is a 536-residue protein sequence, read N- to C-terminus: SNW domain-containing protein 1 (536 aa).

The tract at residues 1 to 44 is disordered; sequence MALTSFLPAPTQLSQDQLEAEERARSQRSLQTSLVSSRREPPPY. Ala-2 bears the N-acetylalanine mark. Ser-14 carries the phosphoserine modification. Over residues 27-36 the composition is skewed to polar residues; it reads QRSLQTSLVS. Residues 59–79 form an interaction with PPIL1 region; the sequence is GDGGAFPEIHVAQYPLDMGRK. Residues Lys-81, Lys-97, Lys-115, Lys-122, Lys-141, Lys-158, and Lys-170 each participate in a glycyl lysine isopeptide (Lys-Gly) (interchain with G-Cter in SUMO2) cross-link. The segment at 174–339 is SNW; that stretch reads AQYIRYTPSQ…KARERRAGIK (166 aa). A phosphoserine mark is found at Ser-182 and Ser-190. Lys-193 participates in a covalent cross-link: Glycyl lysine isopeptide (Lys-Gly) (interchain with G-Cter in SUMO2). The disordered stretch occupies residues 212–233; the sequence is FKINKKIPRGPPSPPAPVMHSP. 3 positions are modified to phosphoserine: Ser-224, Ser-232, and Ser-234. Residues Lys-240, Lys-258, Lys-286, Lys-339, Lys-344, Lys-416, and Lys-441 each participate in a glycyl lysine isopeptide (Lys-Gly) (interchain with G-Cter in SUMO2) cross-link. The interval 311 to 386 is disordered; the sequence is KMAQKEKEKH…RSKLQRNENR (76 aa). Position 446 is a phosphoserine (Ser-446). Lys-452 is covalently cross-linked (Glycyl lysine isopeptide (Lys-Gly) (interchain with G-Cter in SUMO2)). Basic and acidic residues-rich tracts occupy residues 467 to 489 and 503 to 530; these read IKTN…RGRE and KFLE…EHEG. The disordered stretch occupies residues 467 to 536; sequence IKTNRFVPDK…EHEGKKRRKE (70 aa). Phosphoserine occurs at positions 479 and 481. Lys-509 participates in a covalent cross-link: Glycyl lysine isopeptide (Lys-Gly) (interchain with G-Cter in SUMO2).

The protein belongs to the SNW family. Identified in the spliceosome C complex. Associates with U4/U6-U5 tri-small nuclear ribonucleoproteins (U4/U6-U5 tri-snRNPs). Component of the minor spliceosome, which splices U12-type introns. Interacts with SKI, SMAD2,SMAD3, RBPJ, RB1, PABPN1, MAGEA1, SIRT1, FOXN3, U2AF2, PPIL1, DAXX and ATP1B4. Interacts with VDR and RXRA; preferentially associates with VDR:RXRA heterodimers. Interacts with NCOR2. Interacts with MAML1. Interacts with NOTCH1 NICD; the interaction involves multimerized NOTCH1 NICD. Forms a complex with NOTCH1 NICD and MAML1; the association is dissociated by RBPJ. Associates with positive transcription elongation factor b (P-TEFb). Component of the SNARP complex which consists at least of SNIP1, SNW1, THRAP3, BCLAF1 and PNN.

The protein localises to the nucleus. Functionally, involved in pre-mRNA splicing as component of the spliceosome. As a component of the minor spliceosome, involved in the splicing of U12-type introns in pre-mRNAs. Required in the specific splicing of CDKN1A pre-mRNA; the function probably involves the recruitment of U2AF2 to the mRNA. May recruit PPIL1 to the spliceosome. May be involved in cyclin-D1/CCND1 mRNA stability through the SNARP complex which associates with both the 3'end of the CCND1 gene and its mRNA. Involved in transcriptional regulation. Modulates TGF-beta-mediated transcription via association with SMAD proteins, MYOD1-mediated transcription via association with PABPN1, RB1-mediated transcriptional repression, and retinoid-X receptor (RXR)- and vitamin D receptor (VDR)-dependent gene transcription in a cell line-specific manner probably involving coactivators NCOA1 and GRIP1. Is involved in NOTCH1-mediated transcriptional activation. Binds to multimerized forms of Notch intracellular domain (NICD) and is proposed to recruit transcriptional coactivators such as MAML1 to form an intermediate preactivation complex which associates with DNA-bound CBF-1/RBPJ to form a transcriptional activation complex by releasing SNW1 and redundant NOTCH1 NICD. The protein is SNW domain-containing protein 1 (Snw1) of Mus musculus (Mouse).